We begin with the raw amino-acid sequence, 134 residues long: Phosphoribosyl-AMP cyclohydrolase (134 aa).

Asp78 provides a ligand contact to Mg(2+). Cys79 is a Zn(2+) binding site. Asp80 and Asp82 together coordinate Mg(2+). Zn(2+) is bound by residues Cys96 and Cys103.

Belongs to the PRA-CH family. As to quaternary structure, homodimer. Mg(2+) serves as cofactor. Zn(2+) is required as a cofactor.

The protein resides in the cytoplasm. The enzyme catalyses 1-(5-phospho-beta-D-ribosyl)-5'-AMP + H2O = 1-(5-phospho-beta-D-ribosyl)-5-[(5-phospho-beta-D-ribosylamino)methylideneamino]imidazole-4-carboxamide. Its pathway is amino-acid biosynthesis; L-histidine biosynthesis; L-histidine from 5-phospho-alpha-D-ribose 1-diphosphate: step 3/9. In terms of biological role, catalyzes the hydrolysis of the adenine ring of phosphoribosyl-AMP. The protein is Phosphoribosyl-AMP cyclohydrolase of Cupriavidus taiwanensis (strain DSM 17343 / BCRC 17206 / CCUG 44338 / CIP 107171 / LMG 19424 / R1) (Ralstonia taiwanensis (strain LMG 19424)).